Reading from the N-terminus, the 91-residue chain is Small ribosomal subunit protein bS16 (91 aa).

This sequence belongs to the bacterial ribosomal protein bS16 family.

The chain is Small ribosomal subunit protein bS16 from Streptococcus mutans serotype c (strain ATCC 700610 / UA159).